The chain runs to 204 residues: Probable nicotinate-nucleotide adenylyltransferase (204 aa).

This sequence belongs to the NadD family.

The enzyme catalyses nicotinate beta-D-ribonucleotide + ATP + H(+) = deamido-NAD(+) + diphosphate. It functions in the pathway cofactor biosynthesis; NAD(+) biosynthesis; deamido-NAD(+) from nicotinate D-ribonucleotide: step 1/1. Functionally, catalyzes the reversible adenylation of nicotinate mononucleotide (NaMN) to nicotinic acid adenine dinucleotide (NaAD). This chain is Probable nicotinate-nucleotide adenylyltransferase, found in Methylacidiphilum infernorum (isolate V4) (Methylokorus infernorum (strain V4)).